The sequence spans 430 residues: Histidine--tRNA ligase (430 aa).

It belongs to the class-II aminoacyl-tRNA synthetase family. Homodimer.

It is found in the cytoplasm. It carries out the reaction tRNA(His) + L-histidine + ATP = L-histidyl-tRNA(His) + AMP + diphosphate + H(+). This Acinetobacter baumannii (strain ATCC 17978 / DSM 105126 / CIP 53.77 / LMG 1025 / NCDC KC755 / 5377) protein is Histidine--tRNA ligase.